The primary structure comprises 358 residues: Alanine racemase (358 aa).

Lys34 serves as the catalytic Proton acceptor; specific for D-alanine. The residue at position 34 (Lys34) is an N6-(pyridoxal phosphate)lysine. Substrate is bound at residue Arg129. Tyr254 functions as the Proton acceptor; specific for L-alanine in the catalytic mechanism. Met302 provides a ligand contact to substrate.

This sequence belongs to the alanine racemase family. Requires pyridoxal 5'-phosphate as cofactor.

The enzyme catalyses L-alanine = D-alanine. It participates in amino-acid biosynthesis; D-alanine biosynthesis; D-alanine from L-alanine: step 1/1. Its function is as follows. Catalyzes the interconversion of L-alanine and D-alanine. May also act on other amino acids. This Aliivibrio salmonicida (strain LFI1238) (Vibrio salmonicida (strain LFI1238)) protein is Alanine racemase (alr).